A 218-amino-acid polypeptide reads, in one-letter code: Elongation factor Ts (218 aa).

The segment at 82 to 85 (TDFV) is involved in Mg(2+) ion dislocation from EF-Tu.

Belongs to the EF-Ts family.

It is found in the cytoplasm. Its function is as follows. Associates with the EF-Tu.GDP complex and induces the exchange of GDP to GTP. It remains bound to the aminoacyl-tRNA.EF-Tu.GTP complex up to the GTP hydrolysis stage on the ribosome. The chain is Elongation factor Ts from Prochlorococcus marinus (strain MIT 9313).